A 462-amino-acid polypeptide reads, in one-letter code: Lysyl endopeptidase (462 aa).

Residues 1-24 form the signal peptide; that stretch reads MHKRTYLNACLVLALAAGASQALA. Positions 25-211 are excised as a propeptide; it reads APGASEMAGD…VSYFADSLYK (187 aa). Intrachain disulfides connect Cys224–Cys435, Cys230–Cys305, and Cys262–Cys284. Active-site charge relay system residues include His283, Asp333, and Ser409.

Belongs to the peptidase S1 family. In terms of processing, experiments performed in E.coli. Processing of pro-endopeptidase to mature endopeptidase is probably autocatalytic, as mutations in the probable active site residues prevent processing, and purified inactive pro-endopeptidase disappears in the presence of active endopeptidase.

It is found in the secreted. The catalysed reaction is Preferential cleavage: Lys-|-Xaa, including Lys-|-Pro.. In terms of biological role, lysine-specific endoprotease. Involved in corneal virulence. The sequence is that of Lysyl endopeptidase (prpL) from Pseudomonas aeruginosa (strain ATCC 15692 / DSM 22644 / CIP 104116 / JCM 14847 / LMG 12228 / 1C / PRS 101 / PAO1).